A 246-amino-acid chain; its full sequence is Probable chemoreceptor glutamine deamidase CheD (246 aa).

Positions 225-246 (GAGVQPAVQKAASPYAANLSRK) are disordered.

This sequence belongs to the CheD family.

It catalyses the reaction L-glutaminyl-[protein] + H2O = L-glutamyl-[protein] + NH4(+). Probably deamidates glutamine residues to glutamate on methyl-accepting chemotaxis receptors (MCPs), playing an important role in chemotaxis. The polypeptide is Probable chemoreceptor glutamine deamidase CheD (Burkholderia vietnamiensis (strain G4 / LMG 22486) (Burkholderia cepacia (strain R1808))).